Reading from the N-terminus, the 163-residue chain is Cytosolic iron-sulfur assembly component 2B (163 aa).

It belongs to the MIP18 family. As to quaternary structure, component of the CIA complex. Component of the MMXD complex, which includes CIAO1, ERCC2, CIAO2B, MMS19 and SLC25A5. Interacts with CIAO1, ERCC2 and MMS19; the interactions are direct. Interacts with KIF4A; the interaction facilitates the transfer of Fe-S clusters to KIF4A to ensure proper localization of KIF4A to the mitotic machinery. Interacts with CCDC117; the interaction is direct.

It is found in the nucleus. The protein localises to the cytoplasm. The protein resides in the cytoskeleton. It localises to the spindle. Component of the cytosolic iron-sulfur protein assembly (CIA) complex, a multiprotein complex that mediates the incorporation of iron-sulfur cluster into extramitochondrial Fe/S proteins. As a CIA complex component and in collaboration with CIAO1 and MMS19, binds to and facilitates the assembly of most cytosolic-nuclear Fe/S proteins. As part of the mitotic spindle-associated MMXD complex it plays a role in chromosome segregation, probably by facilitating iron-sulfur cluster assembly into ERCC2/XPD. Together with MMS19, facilitates the transfer of Fe-S clusters to the motor protein KIF4A, which ensures proper localization of KIF4A to mitotic machinery components to promote the progression of mitosis. This is Cytosolic iron-sulfur assembly component 2B from Mus musculus (Mouse).